The sequence spans 434 residues: GTPase Obg (434 aa).

The 159-residue stretch at 1-159 (MQFIDRCQIK…KTVRLELKYL (159 aa)) folds into the Obg domain. The OBG-type G domain occupies 160 to 329 (ANVGIVGYPN…LVDRVFDLYQ (170 aa)). GTP is bound by residues 166 to 173 (GYPNAGKS), 191 to 195 (FTTLV), 212 to 215 (DIPG), 282 to 285 (NKMD), and 310 to 312 (ISA). Positions 173 and 193 each coordinate Mg(2+). The OCT domain occupies 356–434 (EKTIDDDPLD…ICDYEYLIDE (79 aa)).

The protein belongs to the TRAFAC class OBG-HflX-like GTPase superfamily. OBG GTPase family. As to quaternary structure, monomer. Mg(2+) is required as a cofactor.

The protein localises to the cytoplasm. Its function is as follows. An essential GTPase which binds GTP, GDP and possibly (p)ppGpp with moderate affinity, with high nucleotide exchange rates and a fairly low GTP hydrolysis rate. Plays a role in control of the cell cycle, stress response, ribosome biogenesis and in those bacteria that undergo differentiation, in morphogenesis control. In Mycoplasmoides gallisepticum (strain R(low / passage 15 / clone 2)) (Mycoplasma gallisepticum), this protein is GTPase Obg.